A 148-amino-acid chain; its full sequence is uncharacterized protein (148 aa).

3 helical membrane passes run 20–42, 52–74, and 118–135; these read YYSK…IANY, YFLM…VRCY, and IIRY…CTYI.

It localises to the cell membrane. This is an uncharacterized protein from Rickettsia prowazekii (strain Madrid E).